Here is an 84-residue protein sequence, read N- to C-terminus: Large ribosomal subunit protein bL27 (84 aa).

Belongs to the bacterial ribosomal protein bL27 family.

In Campylobacter jejuni subsp. jejuni serotype O:6 (strain 81116 / NCTC 11828), this protein is Large ribosomal subunit protein bL27.